The sequence spans 467 residues: Neuromedin-K receptor (467 aa).

The Extracellular portion of the chain corresponds to 1 to 86 (MDSFAAAETW…TNQFVQPSWR (86 aa)). N-linked (GlcNAc...) asparagine glycans are attached at residues Asn-23, Asn-50, and Asn-75. The chain crosses the membrane as a helical span at residues 87–109 (IALWSLAYGVVVAVAVFGNLIVI). Topologically, residues 110 to 119 (WIILAHKRMR) are cytoplasmic. The chain crosses the membrane as a helical span at residues 120–141 (TVTNYFLVNLAFSDASMAAFNT). At 142 to 161 (LVNFIYALHSEWYFGANYCR) the chain is on the extracellular side. The cysteines at positions 160 and 235 are disulfide-linked. A helical membrane pass occupies residues 162–183 (FQNFFPITAVFASIYSMTAIAV). Residues 184–203 (DRYMAIIDPLKPRLSATATK) are Cytoplasmic-facing. A helical membrane pass occupies residues 204-224 (IVIGSIWILAFLLALPQCLYS). At 225–247 (KTKVMPGRTLCYVQWPEGPKQHF) the chain is on the extracellular side. The helical transmembrane segment at 248 to 272 (IYHIIVIILVYCFPLLIMGITYTIV) threads the bilayer. Residues 273-301 (GITLWGGEIPGDTCDKYHEQLKAKRKVVK) lie on the Cytoplasmic side of the membrane. Residues 302–323 (MMIIVVVTFAICWLPYHIYFIL) form a helical membrane-spanning segment. Residues 324–336 (TAIYQQLNRWKYI) are Extracellular-facing. A helical transmembrane segment spans residues 337-361 (QQVYLASFWLAMSSTMYNPIIYCCL). Residues 362–467 (NKRFRAGFKR…SPYTSMEEYS (106 aa)) lie on the Cytoplasmic side of the membrane. A lipid anchor (S-palmitoyl cysteine) is attached at Cys-376. The interval 416–467 (DPSDADNTRSSRKKRATPGDPNFNGCSRRNSKSASTTSSFISSPYTSMEEYS) is disordered. The segment covering 447-467 (KSASTTSSFISSPYTSMEEYS) has biased composition (low complexity).

The protein belongs to the G-protein coupled receptor 1 family.

Its subcellular location is the cell membrane. In terms of biological role, this is a receptor for the tachykinin neuropeptide neuromedin-K (neurokinin B). It is associated with G proteins that activate a phosphatidylinositol-calcium second messenger system. The polypeptide is Neuromedin-K receptor (TACR3) (Oryctolagus cuniculus (Rabbit)).